A 247-amino-acid chain; its full sequence is MRILVSNDDGYFAPGIAALAEALQEVGDVTVVAPERDRSAASNSLTLDRPLSLRRAANGFHFVNGTPTDCVHLAVTGMLDHLPDMVVSGVNHGANMGDDTIYSGTVAAATEGFLLGVPAIAVSLVSKAATDFSAAARVARDLAERFTRIPFQHPVLLNVNVPDRPYEELRGLRVTRLGKRHKAEPVIRSVTPRNETVYWVGAAGQAADAGEGTDFQAVAEGFVSVTPLQIDLTHNGLIPSVAEWIGR.

Asp-8, Asp-9, Ser-39, and Asn-91 together coordinate a divalent metal cation.

This sequence belongs to the SurE nucleotidase family. Requires a divalent metal cation as cofactor.

It localises to the cytoplasm. It carries out the reaction a ribonucleoside 5'-phosphate + H2O = a ribonucleoside + phosphate. In terms of biological role, nucleotidase that shows phosphatase activity on nucleoside 5'-monophosphates. This is 5'-nucleotidase SurE from Aromatoleum aromaticum (strain DSM 19018 / LMG 30748 / EbN1) (Azoarcus sp. (strain EbN1)).